The chain runs to 379 residues: 23S rRNA (uracil(747)-C(5))-methyltransferase RlmC (379 aa).

[4Fe-4S] cluster contacts are provided by C3, C11, C14, and C86. Q211, F240, E262, and N310 together coordinate S-adenosyl-L-methionine. The active-site Nucleophile is the C337.

This sequence belongs to the class I-like SAM-binding methyltransferase superfamily. RNA M5U methyltransferase family. RlmC subfamily.

It carries out the reaction uridine(747) in 23S rRNA + S-adenosyl-L-methionine = 5-methyluridine(747) in 23S rRNA + S-adenosyl-L-homocysteine + H(+). Functionally, catalyzes the formation of 5-methyl-uridine at position 747 (m5U747) in 23S rRNA. This chain is 23S rRNA (uracil(747)-C(5))-methyltransferase RlmC, found in Halothiobacillus neapolitanus (strain ATCC 23641 / c2) (Thiobacillus neapolitanus).